Here is a 731-residue protein sequence, read N- to C-terminus: Elongation factor 2 (731 aa).

Residues 19–260 enclose the tr-type G domain; that stretch reads KHIRNIGIVA…MVVHHLPNPL (242 aa). Residues 28-35, 94-98, and 148-151 contribute to the GTP site; these read AHIDHGKT, DTPGH, and NKVD. His-597 carries the diphthamide modification.

The protein belongs to the TRAFAC class translation factor GTPase superfamily. Classic translation factor GTPase family. EF-G/EF-2 subfamily.

It localises to the cytoplasm. In terms of biological role, catalyzes the GTP-dependent ribosomal translocation step during translation elongation. During this step, the ribosome changes from the pre-translocational (PRE) to the post-translocational (POST) state as the newly formed A-site-bound peptidyl-tRNA and P-site-bound deacylated tRNA move to the P and E sites, respectively. Catalyzes the coordinated movement of the two tRNA molecules, the mRNA and conformational changes in the ribosome. The chain is Elongation factor 2 from Methanoregula boonei (strain DSM 21154 / JCM 14090 / 6A8).